The sequence spans 1046 residues: UDP-N-acetylglucosamine--peptide N-acetylglucosaminyltransferase 110 kDa subunit (1046 aa).

Ala2 bears the N-acetylalanine mark. Phosphoserine; by GSK3-beta; alternate occurs at positions 3 and 4. 2 O-linked (GlcNAc) serine; alternate glycosylation sites follow: Ser3 and Ser4. Phosphoserine is present on Ser20. TPR repeat units lie at residues 21-54, 89-122, 123-156, 157-190, 191-224, 225-258, 259-292, 293-326, 327-360, 361-394, 395-428, and 429-462; these read FQGLAELAHREYQAGDFEAAERHCMQLWRQEPDN, AEAYSNLGNVYKERGQLQEAIEHYRHALRLKPDF, IDGYINLAAALVAAGDMEGAVQAYVSALQYNPDL, YCVRSDLGNLLKALGRLEEAKACYLKAIETQPNF, AVAWSNLGCVFNAQGEIWLAIHHFEKAVTLDPNF, LDAYINLGNVLKEARIFDRAVAAYLRALSLSPNH, AVVHGNLACVYYEQGLIDLAIDTYRRAIELQPHF, PDAYCNLANALKEKGSVAEAEDCYNTALRLCPTH, ADSLNNLANIKREQGNIEEAVRLYRKALEVFPEF, AAAHSNLASVLQQQGKLQEALMHYKEAIRISPTF, ADAYSNMGNTLKEMQDVQGALQCYTRAIQINPAF, and ADAHSNLASIHKDSGNIPEAIASYRTALKLKPDF. The O-linked (GlcNAc) serine; by autocatalysis glycan is linked to Ser399. Thr454 carries the phosphothreonine modification. The stretch at 463-473 is one TPR 13; truncated repeat; sequence PDAYCNLAHCL. The DFP motif signature appears at 464 to 466; that stretch reads DAY. Residues 487-503 carry the Nuclear localization signal motif; sequence KKLVSIVADQLEKNRLP. Catalysis depends on His508, which acts as the Proton acceptor. UDP is bound by residues Gln849, Lys852, 906 to 908, 911 to 914, 930 to 932, and Asp935; these read APK, HVRR, and HTT. Tyr989 carries the post-translational modification Phosphotyrosine. The tract at residues 991-1010 is required for phosphatidylinositol 3,4,5-triphosphate binding; it reads KKIRGKVWKQRISSPLFNTK.

The protein belongs to the glycosyltransferase 41 family. O-GlcNAc transferase subfamily. In terms of assembly, monomer; may exist in different oligomerization states in cells. Homotrimer, oligomerizes via TPR repeats 6 and 7. Trimerization is not necessary for activity in vitro, however it increases affinity for UDP-GlcNAc. Component of a THAP1/THAP3-HCFC1-OGT complex. Component of the NSL complex at least composed of MOF/KAT8, KANSL1, KANSL2, KANSL3, MCRS1, PHF20, OGT1/OGT, WDR5 and HCFC1. Found in a complex with KIF5B, RHOT1, RHOT2 and TRAK1. Found in a complex composed of at least SINHCAF, SIN3A, HDAC1, SAP30, RBBP4, OGT and TET1. Component of a complex composed of KMT2E/MLL5, OGT and USP7; the complex stabilizes KMT2E/MLL5, preventing KMT2E/MLL5 ubiquitination and proteasomal-mediated degradation. Interacts (via TPRs 1-6) with SIN3A; the interaction mediates transcriptional repression in parallel with histone deacetylase. Interacts (via TPR 5-6) with TET1, TET2 and TET3. Interacts (via TPR repeats 6 and 7) with ATXN10. Interacts with NSD2. Interacts with PROSER1; this interaction mediates TET2 O-GlcNAcylation and stability by promoting the interaction between OGT and TET2. In terms of processing, ubiquitinated by the SCF(FBXO31) complex, leading to its proteasomal degradation. Post-translationally, phosphorylation on Ser-3 or Ser-4 by GSK3-beta positively regulates its activity. Phosphorylation at Thr-454 by AMPK promotes nuclear localization. Glycosylated via autocatalysis; O-GlcNAcylation at Ser-399 promotes nuclear localization.

The protein resides in the nucleus. Its subcellular location is the cytoplasm. It carries out the reaction L-seryl-[protein] + UDP-N-acetyl-alpha-D-glucosamine = 3-O-(N-acetyl-beta-D-glucosaminyl)-L-seryl-[protein] + UDP + H(+). The enzyme catalyses L-threonyl-[protein] + UDP-N-acetyl-alpha-D-glucosamine = 3-O-(N-acetyl-beta-D-glucosaminyl)-L-threonyl-[protein] + UDP + H(+). It participates in protein modification; protein glycosylation. With respect to regulation, inhibited by UDP. Catalyzes the transfer of a single N-acetylglucosamine from UDP-GlcNAc to a serine or threonine residue in cytoplasmic and nuclear proteins resulting in their modification with a beta-linked N-acetylglucosamine (O-GlcNAc). Glycosylates a large and diverse number of proteins including histone H2B, AKT1, AMPK, ATG4B, CAPRIN1, EZH2, FNIP1, GSDMD, KRT7, LMNA, LMNB1, LMNB2, RPTOR, HOXA1, PFKL, KMT2E/MLL5, MAPT/TAU, TET2, RBL2, RET, NOD2 and HCFC1. Can regulate their cellular processes via cross-talk between glycosylation and phosphorylation or by affecting proteolytic processing. Involved in insulin resistance in muscle and adipocyte cells via glycosylating insulin signaling components and inhibiting the 'Thr-308' phosphorylation of AKT1, enhancing IRS1 phosphorylation and attenuating insulin signaling. Involved in glycolysis regulation by mediating glycosylation of 6-phosphofructokinase PFKL, inhibiting its activity. Plays a key role in chromatin structure by mediating O-GlcNAcylation of 'Ser-112' of histone H2B: recruited to CpG-rich transcription start sites of active genes via its interaction with TET proteins (TET1, TET2 or TET3). As part of the NSL complex indirectly involved in acetylation of nucleosomal histone H4 on several lysine residues. O-GlcNAcylation of 'Ser-75' of EZH2 increases its stability, and facilitating the formation of H3K27me3 by the PRC2/EED-EZH2 complex. Stabilizes KMT2E/MLL5 by mediating its glycosylation, thereby preventing KMT2E/MLL5 ubiquitination. Regulates circadian oscillation of the clock genes and glucose homeostasis in the liver. Stabilizes clock proteins BMAL1 and CLOCK through O-glycosylation, which prevents their ubiquitination and subsequent degradation. Promotes the CLOCK-BMAL1-mediated transcription of genes in the negative loop of the circadian clock such as PER1/2 and CRY1/2. O-glycosylates HCFC1 and regulates its proteolytic processing and transcriptional activity. Component of a THAP1/THAP3-HCFC1-OGT complex that is required for the regulation of the transcriptional activity of RRM1. Regulates mitochondrial motility in neurons by mediating glycosylation of TRAK1. Promotes autophagy by mediating O-glycosylation of ATG4B. Acts as a regulator of mTORC1 signaling by mediating O-glycosylation of RPTOR and FNIP1: O-GlcNAcylation of RPTOR in response to glucose sufficiency promotes activation of the mTORC1 complex. Functionally, catalyzes the transfer of a single N-acetylglucosamine from UDP-GlcNAc to a serine or threonine residue. Acts on cytoplasmic and nuclear proteins resulting in their modification with a beta-linked N-acetylglucosamine (O-GlcNAc). Glycosylates a large and diverse number of proteins including histone H2B, AKT1, ATG4B, EZH2, PFKL, KMT2E/MLL5, MAPT/TAU, NOD2 and HCFC1. Can regulate their cellular processes via cross-talk between glycosylation and phosphorylation or by affecting proteolytic processing. Probably by glycosylating KMT2E/MLL5, stabilizes KMT2E/MLL5 by preventing its ubiquitination. Involved in insulin resistance in muscle and adipocyte cells via glycosylating insulin signaling components and inhibiting the 'Thr-308' phosphorylation of AKT1, enhancing IRS1 phosphorylation and attenuating insulin signaling. Involved in glycolysis regulation by mediating glycosylation of 6-phosphofructokinase PFKL, inhibiting its activity. Component of a THAP1/THAP3-HCFC1-OGT complex that is required for the regulation of the transcriptional activity of RRM1. Plays a key role in chromatin structure by mediating O-GlcNAcylation of 'Ser-112' of histone H2B: recruited to CpG-rich transcription start sites of active genes via its interaction with TET proteins (TET1, TET2 or TET3). As part of the NSL complex indirectly involved in acetylation of nucleosomal histone H4 on several lysine residues. O-GlcNAcylation of 'Ser-75' of EZH2 increases its stability, and facilitating the formation of H3K27me3 by the PRC2/EED-EZH2 complex. Regulates circadian oscillation of the clock genes and glucose homeostasis in the liver. Stabilizes clock proteins BMAL1 and CLOCK through O-glycosylation, which prevents their ubiquitination and subsequent degradation. Promotes the CLOCK-BMAL1-mediated transcription of genes in the negative loop of the circadian clock such as PER1/2 and CRY1/2. O-glycosylates HCFC1 and regulates its proteolytic processing and transcriptional activity. Regulates mitochondrial motility in neurons by mediating glycosylation of TRAK1. Glycosylates HOXA1. O-glycosylates FNIP1. Promotes autophagy by mediating O-glycosylation of ATG4B. In Oryctolagus cuniculus (Rabbit), this protein is UDP-N-acetylglucosamine--peptide N-acetylglucosaminyltransferase 110 kDa subunit (OGT).